Consider the following 201-residue polypeptide: ATP-dependent Clp protease proteolytic subunit 1 (201 aa).

S102 serves as the catalytic Nucleophile. Residue H127 is part of the active site.

This sequence belongs to the peptidase S14 family. In terms of assembly, fourteen ClpP subunits assemble into 2 heptameric rings which stack back to back to give a disk-like structure with a central cavity, resembling the structure of eukaryotic proteasomes.

It is found in the cytoplasm. The enzyme catalyses Hydrolysis of proteins to small peptides in the presence of ATP and magnesium. alpha-casein is the usual test substrate. In the absence of ATP, only oligopeptides shorter than five residues are hydrolyzed (such as succinyl-Leu-Tyr-|-NHMec, and Leu-Tyr-Leu-|-Tyr-Trp, in which cleavage of the -Tyr-|-Leu- and -Tyr-|-Trp bonds also occurs).. In terms of biological role, cleaves peptides in various proteins in a process that requires ATP hydrolysis. Has a chymotrypsin-like activity. Plays a major role in the degradation of misfolded proteins. The sequence is that of ATP-dependent Clp protease proteolytic subunit 1 from Mesorhizobium japonicum (strain LMG 29417 / CECT 9101 / MAFF 303099) (Mesorhizobium loti (strain MAFF 303099)).